Reading from the N-terminus, the 394-residue chain is Argininosuccinate synthase (394 aa).

ATP is bound at residue 8–16; the sequence is AYSGGLDTS. Positions 86 and 91 each coordinate L-citrulline. Gly-116 is a binding site for ATP. Positions 118, 122, and 123 each coordinate L-aspartate. Position 122 (Asn-122) interacts with L-citrulline. 5 residues coordinate L-citrulline: Arg-126, Ser-172, Ser-181, Glu-257, and Tyr-269.

This sequence belongs to the argininosuccinate synthase family. Type 1 subfamily. As to quaternary structure, homotetramer.

Its subcellular location is the cytoplasm. The catalysed reaction is L-citrulline + L-aspartate + ATP = 2-(N(omega)-L-arginino)succinate + AMP + diphosphate + H(+). The protein operates within amino-acid biosynthesis; L-arginine biosynthesis; L-arginine from L-ornithine and carbamoyl phosphate: step 2/3. This Methanosarcina mazei (strain ATCC BAA-159 / DSM 3647 / Goe1 / Go1 / JCM 11833 / OCM 88) (Methanosarcina frisia) protein is Argininosuccinate synthase.